Reading from the N-terminus, the 237-residue chain is C-type lectin domain family 4 member A (237 aa).

Topologically, residues 1–48 (MTSEITYAEVRFKNEFKSSGINTASSAASKERTAPHKSNTGFPKLLCA) are cytoplasmic. Residues 5–10 (ITYAEV) carry the ITIM motif motif. A helical; Signal-anchor for type II membrane protein membrane pass occupies residues 49-69 (SLLIFFLLLAISFFIAFVIFF). Over 70–237 (QKYSQLLEKK…SVCEMMKIHL (168 aa)) the chain is Extracellular. Disulfide bonds link C106/C117, C134/C230, and C203/C222. A C-type lectin domain is found at 113 to 231 (FSSNCYFIST…CLGPQRSVCE (119 aa)). Residues V143, N145, and E149 each contribute to the Ca(2+) site. Residue N185 is glycosylated (N-linked (GlcNAc...) asparagine). Positions 195, 197, and 201 each coordinate Ca(2+). Alpha-D-mannopyranose is bound by residues 195 to 197 (EPS) and E201. 207–209 (NFR) is an N-acetyl-D-glucosamine binding site. Positions 218, 219, and 231 each coordinate Ca(2+).

In terms of assembly, may interact with PTPN6 via its ITIM motif. Expressed preferentially in hematopoietic tissues. Expressed in all circulating Ag-presenting cells such as dendritic cells, myeloid cells, monocytes, macrophages, B-cells and epidermal Langerhans cells (at protein level). Expressed in peripheral blood leukocytes, neutrophils, moderate quantities in spleen, lymph node, and bone marrow, and at very low levels in thymus.

It is found in the cell membrane. Functionally, C-type lectin receptor that binds carbohydrates mannose and fucose but also weakly interacts with N-acetylglucosamine (GlcNAc) in a Ca(2+)-dependent manner. Involved in regulating immune reactivity. Once triggered by antigen, it is internalized by clathrin-dependent endocytosis and delivers its antigenic cargo into the antigen presentation pathway resulting in cross-priming of CD8(+) T cells. This cross-presentation and cross-priming are enhanced by TLR7 and TLR8 agonists with increased expansion of the CD8(+) T cells, high production of IFNG and TNF with reduced levels of IL4, IL5 and IL13. In plasmacytoid dendritic cells, inhibits TLR9-mediated IFNA and TNF production. May be involved via its ITIM motif (immunoreceptor tyrosine-based inhibitory motifs) in the inhibition of B-cell-receptor-mediated calcium mobilization and protein tyrosine phosphorylation. (Microbial infection) Involved in the interaction between HIV-1 virus and dendritic cells. Enhances HIV-1 binding/entry and virus infection. Requires ITIM motif-associated signal transduction pathway involving phosphatases PTPN6 and PTPN11, SYK, Src kinases and MAP kinases. This chain is C-type lectin domain family 4 member A, found in Homo sapiens (Human).